A 156-amino-acid polypeptide reads, in one-letter code: Small ribosomal subunit protein uS7 (156 aa).

This sequence belongs to the universal ribosomal protein uS7 family. Part of the 30S ribosomal subunit. Contacts proteins S9 and S11.

One of the primary rRNA binding proteins, it binds directly to 16S rRNA where it nucleates assembly of the head domain of the 30S subunit. Is located at the subunit interface close to the decoding center, probably blocks exit of the E-site tRNA. This chain is Small ribosomal subunit protein uS7, found in Syntrophotalea carbinolica (strain DSM 2380 / NBRC 103641 / GraBd1) (Pelobacter carbinolicus).